Here is a 142-residue protein sequence, read N- to C-terminus: UPF0275 protein PM0505 (142 aa).

Belongs to the UPF0275 family.

This Pasteurella multocida (strain Pm70) protein is UPF0275 protein PM0505.